We begin with the raw amino-acid sequence, 251 residues long: Small ribosomal subunit protein uS2 (251 aa).

Position 2 is an N-acetylserine (Ser-2). A disordered region spans residues 209-251; the sequence is EIEQQTAEEAAQEAGEEEAKEEVTEEQTEAAEWAQENADNVEW. The span at 218 to 237 shows a compositional bias: acidic residues; it reads AAQEAGEEEAKEEVTEEQTE. Residues 238-251 show a composition bias toward low complexity; the sequence is AAEWAQENADNVEW.

This sequence belongs to the universal ribosomal protein uS2 family. In terms of assembly, component of the small ribosomal subunit. Mature ribosomes consist of a small (40S) and a large (60S) subunit. The 40S subunit contains about 33 different proteins and 1 molecule of RNA (18S). The 60S subunit contains about 49 different proteins and 3 molecules of RNA (25S, 5.8S and 5S). Interacts with RPS21.

Its subcellular location is the cytoplasm. Functionally, required for the assembly and/or stability of the 40S ribosomal subunit. Required for the processing of the 20S rRNA-precursor to mature 18S rRNA in a late step of the maturation of 40S ribosomal subunits. The chain is Small ribosomal subunit protein uS2 from Candida glabrata (strain ATCC 2001 / BCRC 20586 / JCM 3761 / NBRC 0622 / NRRL Y-65 / CBS 138) (Yeast).